Here is a 471-residue protein sequence, read N- to C-terminus: 3-isopropylmalate dehydratase large subunit (471 aa).

[4Fe-4S] cluster is bound by residues cysteine 351, cysteine 414, and cysteine 417.

This sequence belongs to the aconitase/IPM isomerase family. LeuC type 1 subfamily. In terms of assembly, heterodimer of LeuC and LeuD. [4Fe-4S] cluster is required as a cofactor.

It carries out the reaction (2R,3S)-3-isopropylmalate = (2S)-2-isopropylmalate. The protein operates within amino-acid biosynthesis; L-leucine biosynthesis; L-leucine from 3-methyl-2-oxobutanoate: step 2/4. Its function is as follows. Catalyzes the isomerization between 2-isopropylmalate and 3-isopropylmalate, via the formation of 2-isopropylmaleate. The chain is 3-isopropylmalate dehydratase large subunit from Colwellia psychrerythraea (strain 34H / ATCC BAA-681) (Vibrio psychroerythus).